We begin with the raw amino-acid sequence, 154 residues long: Nuclear cap-binding protein subunit 2-A (154 aa).

Residues Tyr-10, Tyr-33, 102–106, 113–117, and 123–124 contribute to the mRNA site; these read RVDWD, RQYGR, and QV. The RRM domain maps to 30–108; the sequence is STLYVGNLSF…RLIRVDWDAG (79 aa).

It belongs to the RRM NCBP2 family. In terms of assembly, component of the nuclear cap-binding complex (CBC), a heterodimer composed of Cbp80 and Cbp20 that interacts with m7GpppG-capped RNA. Interacts with Ars2.

The protein resides in the nucleus. Functionally, component of the cap-binding complex (CBC), which binds co-transcriptionally to the 5' cap of pre-mRNAs and is involved in various processes such as pre-mRNA splicing and RNA-mediated gene silencing (RNAi). The CBC complex is involved in miRNA-mediated RNA interference via its interaction with Ars2 and is required for primary microRNAs (miRNAs) processing. Also involved in innate immunity via the short interfering RNAs (siRNAs) processing machinery by restricting the viral RNA production. In the CBC complex, Cbp20 recognizes and binds capped RNAs (m7GpppG-capped RNA) but requires Cbp80 to stabilize the movement of its N-terminal loop and lock the CBC into a high affinity cap-binding state with the cap structure. This chain is Nuclear cap-binding protein subunit 2-A (Cbp20-A), found in Drosophila virilis (Fruit fly).